Consider the following 459-residue polypeptide: N-chimaerin (459 aa).

Ala-2 carries the post-translational modification N-acetylalanine. The SH2 domain maps to 49–135 (EFHGMISREA…IETKAAEYIA (87 aa)). Position 192 is a phosphothreonine (Thr-192). The Phorbol-ester/DAG-type zinc finger occupies 205-255 (IHNFKVHTFRGPHWCEYCANFMWGLIAQGVKCADCGLNVHKQCSKMVPNDC). The region spanning 268–459 (CDLTTLVKAH…LLIKNEDILF (192 aa)) is the Rho-GAP domain. Thr-340 carries the post-translational modification Phosphothreonine.

As to quaternary structure, interacts with EPHA4; effector of EPHA4 in axon guidance linking EPHA4 activation to RAC1 regulation. In terms of processing, phosphorylated. Phosphorylation is EPHA4 kinase activity-dependent. As to expression, in neurons in brain regions that are involved in learning and memory processes.

Its function is as follows. GTPase-activating protein for p21-rac and a phorbol ester receptor. Involved in the assembly of neuronal locomotor circuits as a direct effector of EPHA4 in axon guidance. This Homo sapiens (Human) protein is N-chimaerin (CHN1).